We begin with the raw amino-acid sequence, 488 residues long: Transmembrane protein 39A (488 aa).

N-linked (GlcNAc...) asparagine glycosylation is found at Asn31 and Asn39. A run of 8 helical transmembrane segments spans residues 72–92, 110–130, 154–174, 182–202, 287–307, 319–339, 420–440, and 446–466; these read SLLF…IQYI, TSLN…VMLA, VLIS…CWTL, SVLN…LCCF, EVLF…LCFV, CEHL…QLLP, LLNL…YSLL, and NHTL…FKLL.

This sequence belongs to the TMEM39 family. In terms of assembly, interacts with SACM1L, SEC23A and SEC24A.

It localises to the endoplasmic reticulum membrane. In terms of biological role, regulates autophagy by controlling the spatial distribution and levels of the intracellular phosphatidylinositol 4-phosphate (PtdIns(4)P) pools. Modulates (PtdIns(4)P) levels by regulating the ER-to-Golgi trafficking of the phosphatidylinositide phosphatase SACM1L. This is Transmembrane protein 39A (TMEM39A) from Bos taurus (Bovine).